The following is a 450-amino-acid chain: Phosphoglucosamine mutase (450 aa).

Ser102 (phosphoserine intermediate) is an active-site residue. 4 residues coordinate Mg(2+): Ser102, Asp244, Asp246, and Asp248. Position 102 is a phosphoserine (Ser102).

Belongs to the phosphohexose mutase family. It depends on Mg(2+) as a cofactor. Post-translationally, activated by phosphorylation.

The catalysed reaction is alpha-D-glucosamine 1-phosphate = D-glucosamine 6-phosphate. Its function is as follows. Catalyzes the conversion of glucosamine-6-phosphate to glucosamine-1-phosphate. The polypeptide is Phosphoglucosamine mutase (Syntrophomonas wolfei subsp. wolfei (strain DSM 2245B / Goettingen)).